The primary structure comprises 390 residues: Phosphopentomutase (390 aa).

Residues D12, D284, H289, D325, H326, and H337 each coordinate Mn(2+).

The protein belongs to the phosphopentomutase family. It depends on Mn(2+) as a cofactor.

It is found in the cytoplasm. The catalysed reaction is 2-deoxy-alpha-D-ribose 1-phosphate = 2-deoxy-D-ribose 5-phosphate. It catalyses the reaction alpha-D-ribose 1-phosphate = D-ribose 5-phosphate. Its pathway is carbohydrate degradation; 2-deoxy-D-ribose 1-phosphate degradation; D-glyceraldehyde 3-phosphate and acetaldehyde from 2-deoxy-alpha-D-ribose 1-phosphate: step 1/2. Functionally, isomerase that catalyzes the conversion of deoxy-ribose 1-phosphate (dRib-1-P) and ribose 1-phosphate (Rib-1-P) to deoxy-ribose 5-phosphate (dRib-5-P) and ribose 5-phosphate (Rib-5-P), respectively. This is Phosphopentomutase from Macrococcus caseolyticus (strain JCSC5402) (Macrococcoides caseolyticum).